We begin with the raw amino-acid sequence, 662 residues long: UvrABC system protein B (662 aa).

One can recognise a Helicase ATP-binding domain in the interval 31-188 (DNIEGGEKAQ…NDLVDIQFER (158 aa)). Residue 44 to 51 (GATGTGKT) participates in ATP binding. A Beta-hairpin motif is present at residues 97 to 120 (YYDYYQPEAYVPSSDTYIEKDSSV). Residues 435–601 (QIDDLLGEIN…TIKKEIRDLI (167 aa)) enclose the Helicase C-terminal domain. One can recognise a UVR domain in the interval 626–661 (KELVKKLEKQMQEAVEVLDFELAAQIRDMMLEVKAL).

It belongs to the UvrB family. As to quaternary structure, forms a heterotetramer with UvrA during the search for lesions. Interacts with UvrC in an incision complex.

It is found in the cytoplasm. In terms of biological role, the UvrABC repair system catalyzes the recognition and processing of DNA lesions. A damage recognition complex composed of 2 UvrA and 2 UvrB subunits scans DNA for abnormalities. Upon binding of the UvrA(2)B(2) complex to a putative damaged site, the DNA wraps around one UvrB monomer. DNA wrap is dependent on ATP binding by UvrB and probably causes local melting of the DNA helix, facilitating insertion of UvrB beta-hairpin between the DNA strands. Then UvrB probes one DNA strand for the presence of a lesion. If a lesion is found the UvrA subunits dissociate and the UvrB-DNA preincision complex is formed. This complex is subsequently bound by UvrC and the second UvrB is released. If no lesion is found, the DNA wraps around the other UvrB subunit that will check the other stand for damage. This is UvrABC system protein B from Streptococcus pneumoniae (strain Hungary19A-6).